The following is a 306-amino-acid chain: MSVVDQKQQYNLNKLQKRLRRDVGQAIADFNMIEEGDRIMVCLSGGKDSYTLLSILQNLQKSAPVNFSLVAVNLDQKQPGFPEHILPAYLGELGVEYKIVEENTYGIVKEKIPEGKTTCSLCSRLRRGILYRTATELGATKIALGHHRDDILQTLFLNMFYGGKLKGMPPKLMSDDGKHIVIRPLAYCREKDIERYATAKAFPIIPCNLCGSQPNLQRQVIKDMLREWDKRYPGRIETMFRAVQNVVPSHLSDFNLFDFKSITHGSEVIDGGDLAFDREELPMQPVVDIEDQPNYQSERLDIIEVK.

Residues 44–49 (SGGKDS) carry the PP-loop motif motif. Residues Cys119, Cys122, and Cys210 each coordinate [4Fe-4S] cluster.

This sequence belongs to the TtcA family. In terms of assembly, homodimer. It depends on Mg(2+) as a cofactor. [4Fe-4S] cluster is required as a cofactor.

Its subcellular location is the cytoplasm. The catalysed reaction is cytidine(32) in tRNA + S-sulfanyl-L-cysteinyl-[cysteine desulfurase] + AH2 + ATP = 2-thiocytidine(32) in tRNA + L-cysteinyl-[cysteine desulfurase] + A + AMP + diphosphate + H(+). The protein operates within tRNA modification. Catalyzes the ATP-dependent 2-thiolation of cytidine in position 32 of tRNA, to form 2-thiocytidine (s(2)C32). The sulfur atoms are provided by the cysteine/cysteine desulfurase (IscS) system. The polypeptide is tRNA-cytidine(32) 2-sulfurtransferase (Photorhabdus laumondii subsp. laumondii (strain DSM 15139 / CIP 105565 / TT01) (Photorhabdus luminescens subsp. laumondii)).